The primary structure comprises 99 residues: LDVLLGGDDGSLAFIPGNFSVSAGEKITFKNNAGFPHNVVFDEDEIPAGVDASKISMAEEDLLNAAGETYSVTLSEKGTYTFYCAPHQGAGMVGKVTVN.

Positions 1–99 constitute a Plastocyanin-like domain; it reads LDVLLGGDDG…AGMVGKVTVN (99 aa). Cu cation contacts are provided by His37, Cys84, His87, and Met92.

The protein belongs to the plastocyanin family. Cu(2+) is required as a cofactor.

It is found in the plastid. It localises to the chloroplast thylakoid membrane. Functionally, participates in electron transfer between P700 and the cytochrome b6-f complex in photosystem I. This chain is Plastocyanin (PETE), found in Solanum tuberosum (Potato).